Here is a 280-residue protein sequence, read N- to C-terminus: Putative pyruvate, phosphate dikinase regulatory protein (280 aa).

147–154 (GASRSSKT) contributes to the ADP binding site.

The protein belongs to the pyruvate, phosphate/water dikinase regulatory protein family. PDRP subfamily.

The catalysed reaction is N(tele)-phospho-L-histidyl/L-threonyl-[pyruvate, phosphate dikinase] + ADP = N(tele)-phospho-L-histidyl/O-phospho-L-threonyl-[pyruvate, phosphate dikinase] + AMP + H(+). It carries out the reaction N(tele)-phospho-L-histidyl/O-phospho-L-threonyl-[pyruvate, phosphate dikinase] + phosphate + H(+) = N(tele)-phospho-L-histidyl/L-threonyl-[pyruvate, phosphate dikinase] + diphosphate. Bifunctional serine/threonine kinase and phosphorylase involved in the regulation of the pyruvate, phosphate dikinase (PPDK) by catalyzing its phosphorylation/dephosphorylation. The sequence is that of Putative pyruvate, phosphate dikinase regulatory protein from Pelobacter propionicus (strain DSM 2379 / NBRC 103807 / OttBd1).